The primary structure comprises 96 residues: Co-chaperonin GroES (96 aa).

The protein belongs to the GroES chaperonin family. As to quaternary structure, heptamer of 7 subunits arranged in a ring. Interacts with the chaperonin GroEL.

It is found in the cytoplasm. Functionally, together with the chaperonin GroEL, plays an essential role in assisting protein folding. The GroEL-GroES system forms a nano-cage that allows encapsulation of the non-native substrate proteins and provides a physical environment optimized to promote and accelerate protein folding. GroES binds to the apical surface of the GroEL ring, thereby capping the opening of the GroEL channel. The polypeptide is Co-chaperonin GroES (Herminiimonas arsenicoxydans).